The following is a 340-amino-acid chain: Uroporphyrinogen decarboxylase (340 aa).

Residues 21–25 (RQAGR), Asp-71, Tyr-148, Ser-203, and His-316 each bind substrate.

The protein belongs to the uroporphyrinogen decarboxylase family. As to quaternary structure, homodimer.

Its subcellular location is the cytoplasm. The catalysed reaction is uroporphyrinogen III + 4 H(+) = coproporphyrinogen III + 4 CO2. The protein operates within porphyrin-containing compound metabolism; protoporphyrin-IX biosynthesis; coproporphyrinogen-III from 5-aminolevulinate: step 4/4. In terms of biological role, catalyzes the decarboxylation of four acetate groups of uroporphyrinogen-III to yield coproporphyrinogen-III. This Campylobacter lari (strain RM2100 / D67 / ATCC BAA-1060) protein is Uroporphyrinogen decarboxylase.